We begin with the raw amino-acid sequence, 769 residues long: Post-GPI attachment to proteins factor 6 (769 aa).

An N-terminal signal peptide occupies residues 1 to 33 (MGRVGAGGTAREAATGSLLLLLLLLARPPPAAA). Topologically, residues 34–543 (SNSKESEAGL…STAQTVAQQR (510 aa)) are extracellular. Asparagine 138 and asparagine 411 each carry an N-linked (GlcNAc...) asparagine glycan. The 37-residue stretch at 495–531 (PCLNDCGPYGQCLLLRRYGYVYAGCSCKAGWRGWSCT) folds into the EGF-like domain. Disulfide bonds link cysteine 496–cysteine 506, cysteine 500–cysteine 519, and cysteine 521–cysteine 530. The helical transmembrane segment at 544-564 (AAALLLTLSNLMFLAPIAISL) threads the bilayer. Topologically, residues 565–567 (HRS) are cytoplasmic. A helical membrane pass occupies residues 568–588 (FLVEASVYFYTMFFSTFYHAC). The Extracellular segment spans residues 589–603 (DQPGEAVLCILSYDT). The chain crosses the membrane as a helical span at residues 604–624 (LQYCDFLGSGASTWVTILCMA). Over 625-627 (RLK) the chain is Cytoplasmic. Residues 628 to 648 (TILKQVLLVLGTLVIAMSLQM) traverse the membrane as a helical segment. The Extracellular portion of the chain corresponds to 649-651 (DRR). A helical membrane pass occupies residues 652–672 (GIWNLMGPCVFAFVIMASMWI). Topologically, residues 673 to 688 (YRCGHRGQCYPTSWQR) are cytoplasmic. A helical transmembrane segment spans residues 689–709 (WVFYLLPGISMASVGIAMYTS). The Extracellular portion of the chain corresponds to 710–715 (MMTSDN). A helical membrane pass occupies residues 716-736 (YYYTHSIWHILLAGSAAFLLP). The Cytoplasmic segment spans residues 737 to 769 (PREEKAGSWACLQKFPCHYQICRNDRDELYTVT).

This sequence belongs to the TMEM8 family. Glycosylated.

It localises to the cell membrane. Its subcellular location is the lysosome membrane. The catalysed reaction is a 1,2-diacyl-sn-glycero-3-phosphocholine + H2O = a 1-acyl-sn-glycero-3-phosphocholine + a fatty acid + H(+). Functionally, involved in the lipid remodeling steps of GPI-anchor maturation. Lipid remodeling steps consist in the generation of 2 saturated fatty chains at the sn-2 position of GPI-anchor proteins (GPI-AP). Has phospholipase A2 activity that removes an acyl-chain at the sn-2 position of GPI-anchors during the remodeling of GPI. Required for the shedding of the GPI-AP CRIPTO, but not CFC1, at the cell surface. Shedding of CRIPTO modulates Nodal signaling by allowing soluble CRIPTO to act as a Nodal coreceptor on other cells. Also indirectly involved in the translocation of RAC1 from the cytosol to the plasma membrane by maintaining the steady state amount of CAV1-enriched plasma membrane subdomains, stabilizing RAC1 at the plasma membrane. The protein is Post-GPI attachment to proteins factor 6 of Mus musculus (Mouse).